Consider the following 400-residue polypeptide: Renin (400 aa).

The first 17 residues, 1–17 (MPLWGLLLALWGCSTFS), serve as a signal peptide directing secretion. Positions 18–59 (LPADTAAFRRIFLKKMPSVRESLKERGVDMAQLGAEWSQLTK) are cleaved as a propeptide — activation peptide. The N-linked (GlcNAc...) asparagine glycan is linked to Asn-65. Residues 80-397 (YYGEIGIGTP…DRRNNRIGFA (318 aa)) form the Peptidase A1 domain. Asp-98 is a catalytic residue. Cys-111 and Cys-118 form a disulfide bridge. An N-linked (GlcNAc...) asparagine glycan is attached at Asn-135. Cys-277 and Cys-281 are joined by a disulfide. The active site involves Asp-286. Cys-320 and Cys-356 are disulfide-bonded. Residue Asn-353 is glycosylated (N-linked (GlcNAc...) asparagine).

The protein belongs to the peptidase A1 family. Interacts with ATP6AP2. As to expression, kidney.

The protein localises to the secreted. It localises to the membrane. It catalyses the reaction Cleavage of Leu-|-Xaa bond in angiotensinogen to generate angiotensin I.. With respect to regulation, interaction with ATP6AP2 results in a 5-fold increased efficiency in angiotensinogen processing. In terms of biological role, renin is a highly specific endopeptidase, whose only known function is to generate angiotensin I from angiotensinogen in the plasma, initiating a cascade of reactions that produce an elevation of blood pressure and increased sodium retention by the kidney. This chain is Renin (REN), found in Ovis aries (Sheep).